The chain runs to 351 residues: N-acetyl-gamma-glutamyl-phosphate reductase (351 aa).

Cysteine 154 is a catalytic residue.

It belongs to the NAGSA dehydrogenase family. Type 1 subfamily.

The protein resides in the cytoplasm. The catalysed reaction is N-acetyl-L-glutamate 5-semialdehyde + phosphate + NADP(+) = N-acetyl-L-glutamyl 5-phosphate + NADPH + H(+). It participates in amino-acid biosynthesis; L-arginine biosynthesis; N(2)-acetyl-L-ornithine from L-glutamate: step 3/4. Its function is as follows. Catalyzes the NADPH-dependent reduction of N-acetyl-5-glutamyl phosphate to yield N-acetyl-L-glutamate 5-semialdehyde. This Prochlorococcus marinus (strain AS9601) protein is N-acetyl-gamma-glutamyl-phosphate reductase.